We begin with the raw amino-acid sequence, 190 residues long: Large ribosomal subunit protein uL6A (190 aa).

This sequence belongs to the universal ribosomal protein uL6 family. In terms of assembly, component of the large ribosomal subunit (LSU). Mature yeast ribosomes consist of a small (40S) and a large (60S) subunit. The 40S small subunit contains 1 molecule of ribosomal RNA (18S rRNA) and at least 33 different proteins. The large 60S subunit contains 3 rRNA molecules (25S, 5.8S and 5S rRNA) and at least 46 different proteins. uL6 lines the binding pocket for eukaryotic elongation factor 2 (eEF2).

Its subcellular location is the cytoplasm. The protein localises to the nucleus. Its function is as follows. Component of the ribosome, a large ribonucleoprotein complex responsible for the synthesis of proteins in the cell. The small ribosomal subunit (SSU) binds messenger RNAs (mRNAs) and translates the encoded message by selecting cognate aminoacyl-transfer RNA (tRNA) molecules. The large subunit (LSU) contains the ribosomal catalytic site termed the peptidyl transferase center (PTC), which catalyzes the formation of peptide bonds, thereby polymerizing the amino acids delivered by tRNAs into a polypeptide chain. The nascent polypeptides leave the ribosome through a tunnel in the LSU and interact with protein factors that function in enzymatic processing, targeting, and the membrane insertion of nascent chains at the exit of the ribosomal tunnel. In Schizosaccharomyces pombe (strain 972 / ATCC 24843) (Fission yeast), this protein is Large ribosomal subunit protein uL6A (rpl901).